The primary structure comprises 222 residues: ATP-dependent Clp protease proteolytic subunit (222 aa).

Ser-125 acts as the Nucleophile in catalysis. Residue His-150 is part of the active site.

The protein belongs to the peptidase S14 family. In terms of assembly, fourteen ClpP subunits assemble into 2 heptameric rings which stack back to back to give a disk-like structure with a central cavity, resembling the structure of eukaryotic proteasomes.

The protein localises to the cytoplasm. It catalyses the reaction Hydrolysis of proteins to small peptides in the presence of ATP and magnesium. alpha-casein is the usual test substrate. In the absence of ATP, only oligopeptides shorter than five residues are hydrolyzed (such as succinyl-Leu-Tyr-|-NHMec, and Leu-Tyr-Leu-|-Tyr-Trp, in which cleavage of the -Tyr-|-Leu- and -Tyr-|-Trp bonds also occurs).. Its function is as follows. Cleaves peptides in various proteins in a process that requires ATP hydrolysis. Has a chymotrypsin-like activity. Plays a major role in the degradation of misfolded proteins. The chain is ATP-dependent Clp protease proteolytic subunit from Porphyromonas gingivalis (strain ATCC BAA-308 / W83).